The sequence spans 304 residues: Acetylxylan esterase A (304 aa).

Positions 1–24 (MLLSTHLLFVITTLVTSLLHPIDG) are cleaved as a signal peptide. S148 acts as the Charge relay system in catalysis. An N-linked (GlcNAc...) asparagine glycan is attached at N190.

It belongs to the carbohydrate esterase 1 (CE1) family. AxeA subfamily. Monomer.

The protein localises to the secreted. It catalyses the reaction Deacetylation of xylans and xylo-oligosaccharides.. Its pathway is glycan degradation; xylan degradation. With respect to regulation, inactivated by di-isopropylfluorophosphate and phenylmethylsulfonylfluorid (PMSF), a specific inhibitor of serine esterases. Acetylxylan esterase involved in the hydrolysis of xylan, a major structural heterogeneous polysaccharide found in plant biomass representing the second most abundant polysaccharide in the biosphere, after cellulose. Degrades acetylated xylans by cleaving acetyl side groups from the hetero-xylan backbone. The sequence is that of Acetylxylan esterase A (axeA) from Aspergillus awamori (Black koji mold).